The following is a 92-amino-acid chain: LYR motif-containing protein 4A (92 aa).

This sequence belongs to the complex I LYR family.

This is LYR motif-containing protein 4A (lyrm4a) from Salmo salar (Atlantic salmon).